Here is a 129-residue protein sequence, read N- to C-terminus: Small ribosomal subunit protein uS11 (129 aa).

The protein belongs to the universal ribosomal protein uS11 family. In terms of assembly, part of the 30S ribosomal subunit. Interacts with proteins S7 and S18. Binds to IF-3.

Functionally, located on the platform of the 30S subunit, it bridges several disparate RNA helices of the 16S rRNA. Forms part of the Shine-Dalgarno cleft in the 70S ribosome. The polypeptide is Small ribosomal subunit protein uS11 (Psychromonas ingrahamii (strain DSM 17664 / CCUG 51855 / 37)).